The sequence spans 325 residues: tRNA uridine(34) hydroxylase (325 aa).

The region spanning 122 to 218 (EENRCLVLDV…YGQAMGTGKW (97 aa)) is the Rhodanese domain. The active-site Cysteine persulfide intermediate is the Cys-178.

This sequence belongs to the TrhO family.

The catalysed reaction is uridine(34) in tRNA + AH2 + O2 = 5-hydroxyuridine(34) in tRNA + A + H2O. Its function is as follows. Catalyzes oxygen-dependent 5-hydroxyuridine (ho5U) modification at position 34 in tRNAs. The sequence is that of tRNA uridine(34) hydroxylase from Chlamydia felis (strain Fe/C-56) (Chlamydophila felis).